The primary structure comprises 324 residues: Fructose-1,6-bisphosphatase class 1 (324 aa).

Mg(2+) contacts are provided by Glu88, Asp107, Leu109, and Asp110. Substrate is bound by residues 110–113 (DGSS), Asn199, and Lys265. Position 271 (Glu271) interacts with Mg(2+).

This sequence belongs to the FBPase class 1 family. As to quaternary structure, homotetramer. It depends on Mg(2+) as a cofactor.

The protein localises to the cytoplasm. The enzyme catalyses beta-D-fructose 1,6-bisphosphate + H2O = beta-D-fructose 6-phosphate + phosphate. It participates in carbohydrate biosynthesis; gluconeogenesis. This Neisseria meningitidis serogroup A / serotype 4A (strain DSM 15465 / Z2491) protein is Fructose-1,6-bisphosphatase class 1.